A 264-amino-acid chain; its full sequence is MAPRAAAIRQTCCCFNVRIATTALAIYHVIMSVLLFIEHSVEVAHGKASCKFSKTGYLRIAELVSSFLLITMLFIISLSLLVGVVKNREKYLLPFLSLQIMDFLLCLLTLMGSYIELPAYLKFASRSSRRVSPSKVPLMTLQLLDFCLSILTLCSSYMEVPTYLNFKSMNHMNYLPSQDGMTHNQFIKIMIIFSIAFITVLILKVYMFKCVWRCYRLMKCTNSAEERSGSKMLQKVVLPSYEEAVSLPYKVPEGGPAPPPYSEV.

The next 5 helical transmembrane spans lie at 19–39 (IATT…FIEH), 64–84 (VSSF…LVGV), 92–112 (LLPF…TLMG), 136–156 (VPLM…LCSS), and 186–206 (FIKI…LKVY). Phosphotyrosine is present on Tyr261.

Belongs to the LAPTM4/LAPTM5 transporter family. As to quaternary structure, binds to ubiquitin.

It is found in the lysosome membrane. Its function is as follows. May have a special functional role during embryogenesis and in adult hematopoietic cells. This chain is Lysosomal-associated transmembrane protein 5 (LAPTM5), found in Bos taurus (Bovine).